A 395-amino-acid chain; its full sequence is Phosphopentomutase (395 aa).

Residues D12, D289, H294, D330, H331, and H342 each contribute to the Mn(2+) site.

Belongs to the phosphopentomutase family. Mn(2+) is required as a cofactor.

The protein localises to the cytoplasm. The enzyme catalyses 2-deoxy-alpha-D-ribose 1-phosphate = 2-deoxy-D-ribose 5-phosphate. It carries out the reaction alpha-D-ribose 1-phosphate = D-ribose 5-phosphate. It participates in carbohydrate degradation; 2-deoxy-D-ribose 1-phosphate degradation; D-glyceraldehyde 3-phosphate and acetaldehyde from 2-deoxy-alpha-D-ribose 1-phosphate: step 1/2. Functionally, isomerase that catalyzes the conversion of deoxy-ribose 1-phosphate (dRib-1-P) and ribose 1-phosphate (Rib-1-P) to deoxy-ribose 5-phosphate (dRib-5-P) and ribose 5-phosphate (Rib-5-P), respectively. This Levilactobacillus brevis (strain ATCC 367 / BCRC 12310 / CIP 105137 / JCM 1170 / LMG 11437 / NCIMB 947 / NCTC 947) (Lactobacillus brevis) protein is Phosphopentomutase.